A 247-amino-acid chain; its full sequence is Cell division protein ZapD (247 aa).

The protein belongs to the ZapD family. In terms of assembly, interacts with FtsZ.

It is found in the cytoplasm. Its function is as follows. Cell division factor that enhances FtsZ-ring assembly. Directly interacts with FtsZ and promotes bundling of FtsZ protofilaments, with a reduction in FtsZ GTPase activity. In Shigella flexneri, this protein is Cell division protein ZapD.